The following is a 1041-amino-acid chain: RAS protein activator like-3 (1041 aa).

The interval 1–59 (MKPECGQTMFRTFWSRSRDSSAMDPPLQSEEDSQTQPSLPSPLTSYRWHTGGSGEKAAG) is disordered. Residues 34-44 (QTQPSLPSPLT) are compositionally biased toward polar residues. Residues Ser41, Ser74, Ser187, Ser189, Ser190, Ser193, Ser239, Ser252, Ser256, and Ser259 each carry the phosphoserine modification. Residues 218–243 (SNQVHNVRKLLKRLKEKKRAKSELGA) are a coiled coil. In terms of domain architecture, PH spans 220-321 (QVHNVRKLLK…WIEDLRRQFQ (102 aa)). Residues 234-256 (KKRAKSELGAYTPRDGPPSALGS) are disordered. A Phosphothreonine modification is found at Thr262. In terms of domain architecture, C2 spans 312 to 430 (WIEDLRRQFQ…APAAGLERWF (119 aa)). One can recognise a Ras-GAP domain in the interval 500 to 708 (GRAQALVTDL…PAMQHFLDQV (209 aa)). The tract at residues 790-910 (GEKPGFLAPR…PGDRYQTTGT (121 aa)) is disordered. Ser813 and Ser816 each carry phosphoserine. Positions 850-866 (RPTHRRPSAGSKPRPKG) are enriched in basic residues. Residues 931-1013 (QKALSLLVES…LRDSLQSLQL (83 aa)) are a coiled coil. Positions 1016-1041 (KTPGSRSQPLPLKAPCVNGADLSMGT) are disordered.

In terms of tissue distribution, predominantly expressed in hematopoietic tissues.

The protein localises to the cytoplasm. Its subcellular location is the cell cortex. In terms of biological role, functions as a Ras GTPase-activating protein. Plays an important role in the expansion and functions of natural killer T (NKT) cells in the liver by negatively regulating RAS activity and the down-stream ERK signaling pathway. In Mus musculus (Mouse), this protein is RAS protein activator like-3 (Rasal3).